Consider the following 914-residue polypeptide: Neutral alpha-glucosidase C (914 aa).

Aspartate 511 functions as the Nucleophile in the catalytic mechanism. The active site involves glutamate 514. The active-site Proton donor is the aspartate 587.

Belongs to the glycosyl hydrolase 31 family.

It carries out the reaction Hydrolysis of terminal, non-reducing (1-&gt;4)-linked alpha-D-glucose residues with release of alpha-D-glucose.. In terms of biological role, has alpha-glucosidase activity. The polypeptide is Neutral alpha-glucosidase C (GANC) (Homo sapiens (Human)).